The following is a 198-amino-acid chain: Type 1 fimbriae regulatory protein FimE (198 aa).

Residues 2 to 184 (SKRRYLTGKE…NAARFAGLWE (183 aa)) enclose the Tyr recombinase domain. Active-site residues include Arg-41, Lys-66, His-136, Arg-139, and His-162. The active-site O-(3'-phospho-DNA)-tyrosine intermediate is Tyr-171.

The protein belongs to the 'phage' integrase family.

Functionally, fimE is one of the 2 regulatory proteins which control the phase variation of type 1 fimbriae in E.coli. These proteins mediate the periodic inversion of a 300bp DNA segment that harbors the promoter for the fimbrial structural gene, fimA. FimE switches fimA off. The chain is Type 1 fimbriae regulatory protein FimE (fimE) from Escherichia coli O6:H1 (strain CFT073 / ATCC 700928 / UPEC).